The chain runs to 208 residues: Orotidine 5'-phosphate decarboxylase (208 aa).

Residues Asp-7, Lys-29, 57–66 (DLKLADIPNT), Ser-109, 162–172 (PGIGAQGGKAK), Gly-185, and Arg-186 contribute to the substrate site. Residue Lys-59 is the Proton donor of the active site.

Belongs to the OMP decarboxylase family. Type 1 subfamily. In terms of assembly, homodimer.

It catalyses the reaction orotidine 5'-phosphate + H(+) = UMP + CO2. It functions in the pathway pyrimidine metabolism; UMP biosynthesis via de novo pathway; UMP from orotate: step 2/2. Functionally, catalyzes the decarboxylation of orotidine 5'-monophosphate (OMP) to uridine 5'-monophosphate (UMP). This chain is Orotidine 5'-phosphate decarboxylase, found in Pyrococcus abyssi (strain GE5 / Orsay).